The primary structure comprises 251 residues: Uridylate kinase (251 aa).

11-14 (KLSG) contacts ATP. The segment at 19 to 24 (GNQGFG) is involved in allosteric activation by GTP. Gly53 lines the UMP pocket. ATP is bound by residues Gly54 and Arg58. UMP-binding positions include Asp73 and 134–141 (TGNPYFTT). ATP contacts are provided by Thr161, Tyr167, and Asp170.

This sequence belongs to the UMP kinase family. In terms of assembly, homohexamer.

It localises to the cytoplasm. It carries out the reaction UMP + ATP = UDP + ADP. Its pathway is pyrimidine metabolism; CTP biosynthesis via de novo pathway; UDP from UMP (UMPK route): step 1/1. With respect to regulation, allosterically activated by GTP. Inhibited by UTP. Its function is as follows. Catalyzes the reversible phosphorylation of UMP to UDP. The chain is Uridylate kinase from Protochlamydia amoebophila (strain UWE25).